Reading from the N-terminus, the 121-residue chain is UPF0045 protein sll0230 (121 aa).

The protein belongs to the UPF0045 family.

The polypeptide is UPF0045 protein sll0230 (Synechocystis sp. (strain ATCC 27184 / PCC 6803 / Kazusa)).